Here is a 407-residue protein sequence, read N- to C-terminus: Transmembrane protein 184B (407 aa).

Residues 1 to 25 form a disordered region; that stretch reads MTVRGDVLAPDPASPTTAAASPSVS. Low complexity predominate over residues 9–25; sequence APDPASPTTAAASPSVS. Helical transmembrane passes span 40–60, 84–104, 121–141, 178–198, 214–234, 249–269, and 290–310; these read FLMT…ALLI, ILFI…FFTN, LVIY…SSIM, LQFC…QAFG, VTII…LFYF, FFMV…LAIL, and VAAG…ALAL. The interval 369 to 395 is disordered; that stretch reads TLEPGPTWRGGAHGLSRSHSLSGARDN. A phosphoserine mark is found at serine 388, serine 402, and serine 403.

The protein belongs to the TMEM184 family.

Its subcellular location is the membrane. In terms of biological role, may activate the MAP kinase signaling pathway. In Homo sapiens (Human), this protein is Transmembrane protein 184B (TMEM184B).